Here is a 612-residue protein sequence, read N- to C-terminus: Elongation factor 4 (612 aa).

The region spanning 12 to 194 is the tr-type G domain; the sequence is SRIRNFSIIA…QIVEKVPAPA (183 aa). Residues 24-29 and 141-144 contribute to the GTP site; these read DHGKST and NKID.

This sequence belongs to the TRAFAC class translation factor GTPase superfamily. Classic translation factor GTPase family. LepA subfamily.

The protein resides in the cell membrane. The enzyme catalyses GTP + H2O = GDP + phosphate + H(+). Its function is as follows. Required for accurate and efficient protein synthesis under certain stress conditions. May act as a fidelity factor of the translation reaction, by catalyzing a one-codon backward translocation of tRNAs on improperly translocated ribosomes. Back-translocation proceeds from a post-translocation (POST) complex to a pre-translocation (PRE) complex, thus giving elongation factor G a second chance to translocate the tRNAs correctly. Binds to ribosomes in a GTP-dependent manner. The polypeptide is Elongation factor 4 (Bacillus pumilus (strain SAFR-032)).